A 173-amino-acid chain; its full sequence is 2-C-methyl-D-erythritol 2,4-cyclodiphosphate synthase (173 aa).

2 residues coordinate a divalent metal cation: aspartate 17 and histidine 19. Residues aspartate 17–histidine 19 and histidine 49–serine 50 contribute to the 4-CDP-2-C-methyl-D-erythritol 2-phosphate site. A divalent metal cation is bound at residue histidine 57. 4-CDP-2-C-methyl-D-erythritol 2-phosphate-binding positions include phenylalanine 76–aspartate 80, threonine 147–glutamate 150, phenylalanine 154, and arginine 157.

This sequence belongs to the IspF family. In terms of assembly, homotrimer. It depends on a divalent metal cation as a cofactor.

The catalysed reaction is 4-CDP-2-C-methyl-D-erythritol 2-phosphate = 2-C-methyl-D-erythritol 2,4-cyclic diphosphate + CMP. The protein operates within isoprenoid biosynthesis; isopentenyl diphosphate biosynthesis via DXP pathway; isopentenyl diphosphate from 1-deoxy-D-xylulose 5-phosphate: step 4/6. Functionally, involved in the biosynthesis of isopentenyl diphosphate (IPP) and dimethylallyl diphosphate (DMAPP), two major building blocks of isoprenoid compounds. Catalyzes the conversion of 4-diphosphocytidyl-2-C-methyl-D-erythritol 2-phosphate (CDP-ME2P) to 2-C-methyl-D-erythritol 2,4-cyclodiphosphate (ME-CPP) with a corresponding release of cytidine 5-monophosphate (CMP). This is 2-C-methyl-D-erythritol 2,4-cyclodiphosphate synthase from Ehrlichia canis (strain Jake).